Consider the following 166-residue polypeptide: Protein FAM163B (166 aa).

Residues 6 to 26 (VVITGGILATVILLCIIAVLC) traverse the membrane as a helical segment. Position 40 is a phosphoserine (Ser-40).

The protein belongs to the FAM163 family.

Its subcellular location is the membrane. The sequence is that of Protein FAM163B (FAM163B) from Homo sapiens (Human).